The sequence spans 127 residues: Phosphoribosyl-ATP pyrophosphatase (127 aa).

Belongs to the PRA-PH family.

It localises to the cytoplasm. The enzyme catalyses 1-(5-phospho-beta-D-ribosyl)-ATP + H2O = 1-(5-phospho-beta-D-ribosyl)-5'-AMP + diphosphate + H(+). The protein operates within amino-acid biosynthesis; L-histidine biosynthesis; L-histidine from 5-phospho-alpha-D-ribose 1-diphosphate: step 2/9. This chain is Phosphoribosyl-ATP pyrophosphatase, found in Polaromonas sp. (strain JS666 / ATCC BAA-500).